Reading from the N-terminus, the 696-residue chain is L-amino-acid oxidase (696 aa).

A propeptide spanning residues 1–130 (MKWSAAAGAA…IKMRRDLKAR (130 aa)) is cleaved from the precursor. Residues Glu-207, Arg-215, 236 to 237 (MR), and Val-440 contribute to the FAD site. Arg-237 provides a ligand contact to substrate. Position 564 (Tyr-564) interacts with substrate. FAD-binding positions include Glu-649 and 658 to 661 (IASA).

Belongs to the flavin monoamine oxidase family. FAD is required as a cofactor.

It catalyses the reaction an L-alpha-amino acid + O2 + H2O = a 2-oxocarboxylate + H2O2 + NH4(+). This chain is L-amino-acid oxidase (lox), found in Neurospora crassa (strain ATCC 24698 / 74-OR23-1A / CBS 708.71 / DSM 1257 / FGSC 987).